The primary structure comprises 478 residues: METDTGALPKKQDFSEWYNEILWRAEIMDVRYPVKGLYVWFPYGFAIRKFVYQHLRELLDRDHKETLFPLLIPEQEFMKEAEHIKGFEDEVYWVTHGGTTPLEVKLALRPTSETAIYPMFALWVRSHADLPIKIYQIVNTFRYETKQTRPLIRLREITSFMESHTVHATWDEAEIQVESEIALTREFYRNLCIPIIISKRPDWDKFPGADYTIAVDAIMPNGKTLQIGTVHHLGNHFSRTFNIQYEDKNGEQKEAYQTCYGISERCIAALISLHGDDKGLILPPTVATFQVVIVPITIGKRHEDVLAAAGKLKNDLENAGLRVTLDTRDLRPGAKYYWWEIRGVPLRLELGPRDLDSGKAMAVTRTGEKTTICLANAAEDTTSILTGITDAIRAKAGEHTKSHLCTTHTMDGLDIALNEGKVAVVHWCRDRTCGDTIEEKANSSLLGTEVRSEYIEATDGPCIICGKPGKATLVGRTY.

This sequence belongs to the class-II aminoacyl-tRNA synthetase family. ProS type 3 subfamily. In terms of assembly, homodimer.

The protein localises to the cytoplasm. The enzyme catalyses tRNA(Pro) + L-proline + ATP = L-prolyl-tRNA(Pro) + AMP + diphosphate. Its function is as follows. Catalyzes the attachment of proline to tRNA(Pro) in a two-step reaction: proline is first activated by ATP to form Pro-AMP and then transferred to the acceptor end of tRNA(Pro). The sequence is that of Proline--tRNA ligase from Methanoregula boonei (strain DSM 21154 / JCM 14090 / 6A8).